Here is a 291-residue protein sequence, read N- to C-terminus: ATP synthase gamma chain (291 aa).

The protein belongs to the ATPase gamma chain family. As to quaternary structure, F-type ATPases have 2 components, CF(1) - the catalytic core - and CF(0) - the membrane proton channel. CF(1) has five subunits: alpha(3), beta(3), gamma(1), delta(1), epsilon(1). CF(0) has three main subunits: a, b and c.

The protein localises to the cell inner membrane. Its function is as follows. Produces ATP from ADP in the presence of a proton gradient across the membrane. The gamma chain is believed to be important in regulating ATPase activity and the flow of protons through the CF(0) complex. This is ATP synthase gamma chain from Rhodopseudomonas palustris (strain HaA2).